The sequence spans 167 residues: uncharacterized protein (167 aa).

2 consecutive DED domains span residues 2–75 (DLKT…NLFQ) and 93–167 (THVL…AKTV).

This is an uncharacterized protein from Saimiriine herpesvirus 2 (strain 11) (SaHV-2).